Here is a 794-residue protein sequence, read N- to C-terminus: Copper-exporting P-type ATPase (794 aa).

HMA domains lie at 4–69 (TTLT…YDVA) and 71–137 (EQVE…YDAE). Residues Cys15, Cys18, Cys82, and Cys85 each coordinate Cu(+). 6 helical membrane passes run 161–181 (IISA…ISPI), 186–206 (ILVN…IIGW), 225–245 (VLVA…MMMW), 255–275 (LYFE…YLEA), 410–430 (YFVP…IIFV), and 437–457 (PALV…LGLA). Asp494 serves as the catalytic 4-aspartylphosphate intermediate. Residues Asp689 and Asp693 each coordinate Mg(2+). The next 2 membrane-spanning stretches (helical) occupy residues 747-767 (LFWA…GLLA) and 773-789 (AAMA…ALRL).

The protein belongs to the cation transport ATPase (P-type) (TC 3.A.3) family. Type IB subfamily.

The protein localises to the cell membrane. It carries out the reaction Cu(+)(in) + ATP + H2O = Cu(+)(out) + ADP + phosphate + H(+). In terms of biological role, involved in copper export. The chain is Copper-exporting P-type ATPase (copA) from Staphylococcus epidermidis (strain ATCC 35984 / DSM 28319 / BCRC 17069 / CCUG 31568 / BM 3577 / RP62A).